Consider the following 256-residue polypeptide: MLNLFITSPLDQFEIRVLMGFTSPLLDFSSLNFTTFSLYTIIVLFTVLGLNLLTTNNNKIIGSKWFVSQEAIYDTILNMVKGQIGGKLWGYYFPLVYTFFFFIFVSNLISMIPYSFALSAHLIFIVSLSSVIWLGATIIGLTKHGLVFFSLFVPGGTPLPLVPLLVLIELLSYFARAISLGLRLSSNVLSGHLLLIILGGLLFNLMSMSIITFVFGLIPGVGLLAIVVLEFAISVIQAYVWSILTSSYLKDVLYLH.

Positions 1-7 are cleaved as a propeptide — removed in mature form; the sequence is MLNLFIT. 6 consecutive transmembrane segments (helical) span residues 33 to 53, 92 to 112, 122 to 142, 148 to 168, 188 to 208, and 209 to 229; these read FTTF…LNLL, YFPL…ISMI, LIFI…IGLT, FFSL…LVLI, VLSG…LMSM, and SIIT…IVVL.

This sequence belongs to the ATPase A chain family. In terms of assembly, F-type ATPases have 2 components, CF(1) - the catalytic core - and CF(0) - the membrane proton channel. CF(1) has five subunits: alpha(3), beta(3), gamma(1), delta(1), epsilon(1). CF(0) has three main subunits: a, b and c.

It localises to the mitochondrion inner membrane. Its function is as follows. Mitochondrial membrane ATP synthase (F(1)F(0) ATP synthase or Complex V) produces ATP from ADP in the presence of a proton gradient across the membrane which is generated by electron transport complexes of the respiratory chain. F-type ATPases consist of two structural domains, F(1) - containing the extramembraneous catalytic core and F(0) - containing the membrane proton channel, linked together by a central stalk and a peripheral stalk. During catalysis, ATP synthesis in the catalytic domain of F(1) is coupled via a rotary mechanism of the central stalk subunits to proton translocation. Key component of the proton channel; it may play a direct role in the translocation of protons across the membrane. The protein is ATP synthase subunit a (ATP6) of Kluyveromyces lactis (strain ATCC 8585 / CBS 2359 / DSM 70799 / NBRC 1267 / NRRL Y-1140 / WM37) (Yeast).